The chain runs to 468 residues: MKTTHRTRMPTTLEAFSPIIVMLLLLGLGYALFDLPAEPLMIISTVFAGFLVFKLGHCYLDILDAISEKIAKTMPALLILITVGLLIGTWISGGTIPMMIYYGLKAISPEYLYVTALFLTAIVSICTGTSWGSAGTVGVAFMGVAIGLDANLAATAGAVVAGAYFGDKLSPLSDTTNIASAAAGVDLYEHIAHLLYTTLPSFILSATVYVVYGLNYDFSNVATPEKVNTMIHELEQVYHFNFLLLIPVAIVLWGSITKKPTIPVMLLSAFIAIINAILIQKFSLSDVINSAVNGFDTSMIHHTSVSSDLSRLLNRGGMNSMMGTLLICFCALSFAGVLQLSGALTVIIQKLLTFVHSTLSLIITTILCGLTMIGVTCNGQISILIPGEMLKNAYVEKGLHPKNLSRTAEDSATIIEPILPWTAAGAYMAGTLGVATLSYLPWAILCWSGIIFAIIYGASGIGIAKLKK.

12 helical membrane-spanning segments follow: residues 13-33, 40-60, 76-96, 112-132, 141-161, 194-214, 237-257, 260-280, 328-348, 354-374, 414-434, and 443-463; these read LEAF…YALF, LMII…HCYL, ALLI…GGTI, LYVT…TSWG, FMGV…AVVA, LLYT…VYGL, VYHF…GSIT, PTIP…ILIQ, CFCA…TVII, FVHS…TMIG, IIEP…TLGV, and AILC…GIGI.

Belongs to the NhaC Na(+)/H(+) (TC 2.A.35) antiporter family.

The protein resides in the cell membrane. This is an uncharacterized protein from Haemophilus influenzae (strain ATCC 51907 / DSM 11121 / KW20 / Rd).